Reading from the N-terminus, the 689-residue chain is DNA topoisomerase 1 (689 aa).

In terms of domain architecture, Toprim spans 3–113; the sequence is DNLVIVESPA…KENRVVFNEI (111 aa). Positions 9 and 82 each coordinate Mg(2+). In terms of domain architecture, Topo IA-type catalytic spans 129-557; that stretch reads EMNLVDAQQA…FFSSFKQDVE (429 aa). The interaction with DNA stretch occupies residues 163–168; the sequence is SAGRVQ. Tyr298 acts as the O-(5'-phospho-DNA)-tyrosine intermediate in catalysis. A disordered region spans residues 328 to 356; it reads SKRKASGKQGDQDAHEAIRPSSTMRTPDD. 3 consecutive C4-type zinc fingers follow at residues 577 to 603, 617 to 645, and 658 to 681; these read CEIC…FPDC, CPKC…YPEC, and CPKC…CSNC.

It belongs to the type IA topoisomerase family. In terms of assembly, monomer. The cofactor is Mg(2+).

It catalyses the reaction ATP-independent breakage of single-stranded DNA, followed by passage and rejoining.. Releases the supercoiling and torsional tension of DNA, which is introduced during the DNA replication and transcription, by transiently cleaving and rejoining one strand of the DNA duplex. Introduces a single-strand break via transesterification at a target site in duplex DNA. The scissile phosphodiester is attacked by the catalytic tyrosine of the enzyme, resulting in the formation of a DNA-(5'-phosphotyrosyl)-enzyme intermediate and the expulsion of a 3'-OH DNA strand. The free DNA strand then undergoes passage around the unbroken strand, thus removing DNA supercoils. Finally, in the religation step, the DNA 3'-OH attacks the covalent intermediate to expel the active-site tyrosine and restore the DNA phosphodiester backbone. The polypeptide is DNA topoisomerase 1 (Staphylococcus aureus (strain USA300)).